The following is a 639-amino-acid chain: Kininogen-1 (639 aa).

A signal peptide spans 1–18 (MKLITILLLCSRLLPSLA). Positions 28 to 132 (CNDESLFQAV…TQICNITPGK (105 aa)) constitute a Cystatin kininogen-type 1 domain. Cystine bridges form between C28–C609, C83–C94, C107–C126, C142–C145, C206–C218, C229–C248, C264–C267, C328–C340, and C351–C370. N82 carries an N-linked (GlcNAc...) asparagine glycan. Residues 151-254 (VDSPELGPVL…SDSCEFYPGD (104 aa)) enclose the Cystatin kininogen-type 2 domain. N169 and N205 each carry an N-linked (GlcNAc...) asparagine glycan. Residues 273 to 376 (VDSPELKEAL…TVKCKVLDMT (104 aa)) form the Cystatin kininogen-type 3 domain. A glycan (N-linked (GlcNAc...) asparagine) is linked at N294. S332 carries the phosphoserine modification. Disordered regions lie at residues 438–462 (NHQG…GHGH) and 476–547 (GYDH…LNPP). Over residues 482-502 (PVGHGHGQRHGHGHGHGHGRD) the composition is skewed to basic residues. Positions 503-519 (KHTNKDKNNVKHTDQRR) are enriched in basic and acidic residues. The span at 522-537 (LTSSSEDNTTSTQIQG) shows a compositional bias: polar residues. N529 is a glycosylation site (N-linked (GlcNAc...) asparagine).

Bradykinin is released from kininogen by plasma kallikrein. Post-translationally, phosphorylated by FAM20C in the extracellular medium. In terms of processing, bradykinin is inactivated by ACE, which removes the dipeptide Arg-Phe from its C-terminus. In terms of tissue distribution, plasma.

It is found in the secreted. It localises to the extracellular space. In terms of biological role, kininogens are inhibitors of thiol proteases. HMW-kininogen plays an important role in blood coagulation by helping to position optimally prekallikrein and factor XI next to factor XII; HMW-kininogen inhibits the thrombin- and plasmin-induced aggregation of thrombocytes. LMW-kininogen inhibits the aggregation of thrombocytes. LMW-kininogen is in contrast to HMW-kininogen not involved in blood clotting. Functionally, the active peptide bradykinin is a potent vasodilatator that is released from HMW-kininogen shows a variety of physiological effects: (A) influence in smooth muscle contraction, (B) induction of hypotension, (C) natriuresis and diuresis, (D) decrease in blood glucose level, (E) it is a mediator of inflammation and causes (E1) increase in vascular permeability, (E2) stimulation of nociceptors (4E3) release of other mediators of inflammation (e.g. prostaglandins), (F) it has a cardioprotective effect (directly via bradykinin action, indirectly via endothelium-derived relaxing factor action). The polypeptide is Kininogen-1 (Kng1) (Rattus norvegicus (Rat)).